The sequence spans 1250 residues: Probable autotransporter YfaL (1250 aa).

Residues 1–28 (MRIIFLRKEYLSLLPSMIASLFSANGVA) form the signal peptide. The segment at 914–951 (RSQEVTPPSPPDPDPTPDPDPTPDPDPTPDPEPTPAYQ) is disordered. Copy 1 of the repeat occupies 919-920 (TP). The 15 X 2 AA approximate tandem repeats of [DTPE]-P stretch occupies residues 919–948 (TPPSPPDPDPTPDPDPTPDPDPTPDPEPTP). A 2; approximate repeat occupies 921-922 (PS). Copy 3 of the repeat occupies 923 to 924 (PP). A 4; approximate repeat occupies 925–926 (DP). 11 consecutive repeat copies span residues 927–928 (DP), 929–930 (TP), 931–932 (DP), 933–934 (DP), 935–936 (TP), 937–938 (DP), 939–940 (DP), 941–942 (TP), 943–944 (DP), 945–946 (EP), and 947–948 (TP). Over residues 928–942 (PTPDPDPTPDPDPTP) the composition is skewed to acidic residues. Residues 980–1250 (AGGDGQTLNL…AGFLSMTVKW (271 aa)) form the Autotransporter domain.

In terms of processing, an approximately 170 kDa protein is detected in the outer membrane, while a C-terminal 55 kDa fragment is detected in whole cells. The full-length putative autotransporter may be cleaved to release the mature protein from the outer membrane; Pefabloc SC, a Ser-Thr protease inhibitor prevents the appearance of the 55 kDa C--terminal fragment.

It is found in the periplasm. It localises to the secreted. The protein resides in the cell surface. The protein localises to the cell outer membrane. Its function is as follows. Probably an autotransporter. Upon overexpression shows increased adherence to polyvinyl chloride (PVC) plates, increased mature biofilm formation. The chain is Probable autotransporter YfaL (yfaL) from Escherichia coli (strain K12).